Reading from the N-terminus, the 412-residue chain is Double C2-like domain-containing protein beta (412 aa).

The tract at residues 1-36 (MTLRRRGEKATISIQEHMAIDVCPGPIRPIKQISDY) is negatively regulates targeting to plasma membrane. The segment at 1 to 90 (MTLRRRGEKA…EDVDQLFGAY (90 aa)) is mediates interaction with DYNLT1. Positions 38–123 (PRFPRGLPPD…PDADGYESDD (86 aa)) are disordered. The span at 49-70 (GPRAAAPPDAPARPAVAGAGRR) shows a compositional bias: low complexity. Pro residues predominate over residues 95–108 (GPSPGPSPARPPAK). Over residues 112-123 (DEPDADGYESDD) the composition is skewed to acidic residues. C2 domains lie at 126 to 250 (ALGT…SICL) and 266 to 399 (ERGR…ERWH). Residues Asp157, Asp163, Asp218, Asp220, Asp297, Asp303, Asp357, Asp359, and Asp365 each coordinate Ca(2+). The tract at residues 257-375 (DKTEDKSLEE…FIGGVVLGIH (119 aa)) is mediates interaction with STXBP3. A Phosphoserine modification is found at Ser411.

As to quaternary structure, interacts with the SNARE (soluble N-ethylmaleimide-sensitive factor attached protein receptor) complex composed of SNAP25, STX1A and VAMP2; the interaction is calcium-dependent and competitive with SYT1. Interacts with STX4; the interaction is calcium-dependent, increased by insulin and glucose, and mediates vesicle fusion with plasma membrane in pancreatic cells and adipocytes. Interacts with STXBP3; the interaction is direct, occurs at the cell membrane and regulates glucose-stimulated insulin secretion. May interact with UNC13A; the interaction mediates targeting to the plasma membrane. Interacts with cytoplasmic dynein light chain DYNLT1. Requires Ca(2+) as cofactor. As to expression, widely expressed with highest levels in brain and kidney. Expressed in pancreatic islet cells (at protein level).

It localises to the cytoplasm. The protein resides in the cytoplasmic granule. The protein localises to the cell membrane. Functionally, calcium sensor which positively regulates SNARE-dependent fusion of vesicles with membranes. Binds phospholipids in a calcium-dependent manner and may act at the priming stage of fusion by modifying membrane curvature to stimulate fusion. Involved in calcium-triggered exocytosis in chromaffin cells and calcium-dependent spontaneous release of neurotransmitter in absence of action potentials in neuronal cells. Involved both in glucose-stimulated insulin secretion in pancreatic cells and insulin-dependent GLUT4 transport to the plasma membrane in adipocytes. The chain is Double C2-like domain-containing protein beta from Homo sapiens (Human).